The sequence spans 674 residues: Tripartite terminase subunit 3 (674 aa).

The Walker A motif signature appears at 212–219 (VPRRHGKT). The short motif at 305–310 (LLLVDE) is the Walker B motif element. The For ATPase activity role is filled by E310. Residues D463, E534, and D651 each act as for nuclease activity in the active site.

Belongs to the herpesviridae TRM3 protein family. Interacts with the terminase subunits TRM1 and TRM2. Interacts with portal protein.

Its subcellular location is the host nucleus. Its function is as follows. Component of the molecular motor that translocates viral genomic DNA in empty capsid during DNA packaging. Forms a tripartite terminase complex together with TRM1 and TRM2 in the host cytoplasm. Once the complex reaches the host nucleus, it interacts with the capsid portal vertex. This portal forms a ring in which genomic DNA is translocated into the capsid. TRM3 carries an RNase H-like nuclease activity that plays an important role for the cleavage of concatemeric viral DNA into unit length genomes. The chain is Tripartite terminase subunit 3 from Homo sapiens (Human).